Reading from the N-terminus, the 194-residue chain is MQKIMISDAAQAHFRRLLDQQEEGTHIRIFVVNPGTPNAECGVSYCPPNAVEATDTEMQYASFSAFVDEISLPFLDEAEIDYVTEELGAQLTLKAPNAKMRKVADDAPLLERVEYVIQTQINPQLAGHGGRITLIEITEDGYAILQFGGGCNGCSMVDVTLKDGIEKQLLSLFPGELQGAKDVTEHQRGEHSYY.

[4Fe-4S] cluster contacts are provided by C151 and C154.

The protein belongs to the NfuA family. As to quaternary structure, homodimer. The cofactor is [4Fe-4S] cluster.

Involved in iron-sulfur cluster biogenesis. Binds a 4Fe-4S cluster, can transfer this cluster to apoproteins, and thereby intervenes in the maturation of Fe/S proteins. Could also act as a scaffold/chaperone for damaged Fe/S proteins. The chain is Fe/S biogenesis protein NfuA from Pasteurella multocida (strain Pm70).